A 108-amino-acid polypeptide reads, in one-letter code: Transcription factor AmrZ (108 aa).

Functionally, functions both as a transcriptional activator and a repressor of multiple genes encoding virulence factors as well as genes involved in environmental adaptation. Represses genes involved in iron homeostasis. Modulates intracellular levels of c-di-GMP which in turn regulates swimming motility and biofilm formation. The protein is Transcription factor AmrZ of Pseudomonas ogarae (strain DSM 112162 / CECT 30235 / F113).